Here is a 320-residue protein sequence, read N- to C-terminus: Geranylgeranyl pyrophosphate synthase (320 aa).

The isopentenyl diphosphate site is built by K35, R38, and H67. D74 and D78 together coordinate Mg(2+). R83 contacts dimethylallyl diphosphate. An isopentenyl diphosphate-binding site is contributed by R84. 5 residues coordinate dimethylallyl diphosphate: K168, T169, Q206, K223, and K233.

Belongs to the FPP/GGPP synthase family. Mg(2+) is required as a cofactor.

It is found in the cytoplasm. It catalyses the reaction isopentenyl diphosphate + dimethylallyl diphosphate = (2E)-geranyl diphosphate + diphosphate. The catalysed reaction is isopentenyl diphosphate + (2E)-geranyl diphosphate = (2E,6E)-farnesyl diphosphate + diphosphate. The enzyme catalyses isopentenyl diphosphate + (2E,6E)-farnesyl diphosphate = (2E,6E,10E)-geranylgeranyl diphosphate + diphosphate. It participates in isoprenoid biosynthesis; farnesyl diphosphate biosynthesis; farnesyl diphosphate from geranyl diphosphate and isopentenyl diphosphate: step 1/1. Its pathway is isoprenoid biosynthesis; geranyl diphosphate biosynthesis; geranyl diphosphate from dimethylallyl diphosphate and isopentenyl diphosphate: step 1/1. The protein operates within isoprenoid biosynthesis; geranylgeranyl diphosphate biosynthesis; geranylgeranyl diphosphate from farnesyl diphosphate and isopentenyl diphosphate: step 1/1. Catalyzes the trans-addition of the 3 molecules of IPP onto DMAPP to form geranylgeranyl pyrophosphate. May be involved in vesicle trafficking and protein sorting. In Eremothecium gossypii (strain ATCC 10895 / CBS 109.51 / FGSC 9923 / NRRL Y-1056) (Yeast), this protein is Geranylgeranyl pyrophosphate synthase (BTS1).